We begin with the raw amino-acid sequence, 102 residues long: Vacuolar ATPase assembly integral membrane protein VMA21 (102 aa).

The Cytoplasmic segment spans residues 1-30; the sequence is MERYDKATLNAAFAPEFRQNEGSLTSTLRT. Residues 31–51 traverse the membrane as a helical segment; sequence LLFFTALMITLPVGLYFSSKA. Residues 52 to 66 lie on the Lumenal side of the membrane; the sequence is YIFEGTLGMSNRDSY. A helical membrane pass occupies residues 67 to 87; sequence FYAAIVAVVTVHVVLAMFVYV. Residues 88–102 lie on the Cytoplasmic side of the membrane; sequence AWSEGTRQWREGKQD.

This sequence belongs to the VMA21 family. In terms of assembly, associates with the V0 complex of the vacuolar ATPase (V-ATPase). Interacts with ATP6AP2.

The protein resides in the endoplasmic reticulum membrane. It localises to the endoplasmic reticulum-Golgi intermediate compartment membrane. Its subcellular location is the cytoplasmic vesicle. It is found in the COPII-coated vesicle membrane. Required for the assembly of the V0 complex of the vacuolar ATPase (V-ATPase) in the endoplasmic reticulum. In Gallus gallus (Chicken), this protein is Vacuolar ATPase assembly integral membrane protein VMA21.